The primary structure comprises 91 residues: MSRTIFCTYLQRDAEGQDFQLYPGELGKRIYNEISKDAWAQWQHKQTMLINEKKLNMMNAEHRKLLEQEMVSFLFEGKDVHIEGYTPEDKK.

It belongs to the Fe(2+)-trafficking protein family. As to quaternary structure, monomer.

Could be a mediator in iron transactions between iron acquisition and iron-requiring processes, such as synthesis and/or repair of Fe-S clusters in biosynthetic enzymes. The polypeptide is Probable Fe(2+)-trafficking protein (Salmonella agona (strain SL483)).